Consider the following 144-residue polypeptide: Transcriptional regulator SlyA (144 aa).

The 134-residue stretch at 2-135 (ESSLGSDLAR…LNNIIAKLER (134 aa)) folds into the HTH marR-type domain. A DNA-binding region (H-T-H motif) is located at residues 49–72 (QIQLAKAIGIEQPSLVRTLDQLES).

Belongs to the SlyA family. As to quaternary structure, homodimer.

Transcription regulator that can specifically activate or repress expression of target genes. The sequence is that of Transcriptional regulator SlyA from Blochmanniella floridana.